The following is a 292-amino-acid chain: DCN1-like protein 4 (292 aa).

A disordered region spans residues 43-83; sequence HQTGSLRSCSSSDCFNKVMPPRKKRRPASGDDLSAKKSRHD. A compositionally biased stretch (polar residues) spans 45 to 56; the sequence is TGSLRSCSSSDC. Lys95 is covalently cross-linked (Glycyl lysine isopeptide (Lys-Gly) (interchain with G-Cter in SUMO2)). The 187-residue stretch at 101 to 287 folds into the DCUN1 domain; it reads FSSKRCLEWF…LLDEFVEWYK (187 aa).

As to quaternary structure, interacts (via the DCUN1 domain) with the unneddylated cullins: interacts with CUL1, CUL2, CUL3, CUL4A, CUL4B and CUL5; these interactions promote the cullin neddylation and the identity of the cullin dictates the affinity of the interaction. Interacts with RBX1 and RNF7. Interacts with CAND1; this interaction is bridged by cullins such as CUL3 and strongly inhibits the neddylation of CUL3. These CAND-cullin-DCNL complexes can only be neddylated in the presence of a substrate adapter. Interacts (via DCUN1 domain) with UBE2M (N-terminally acetylated form) and probably with UBE2F (N-terminally acetylated form).

The protein localises to the nucleus. Contributes to the neddylation of all cullins by transferring NEDD8 from N-terminally acetylated NEDD8-conjugating E2s enzyme to different cullin C-terminal domain-RBX complexes which are necessary for the activation of cullin-RING E3 ubiquitin ligases (CRLs). This is DCN1-like protein 4 from Homo sapiens (Human).